The primary structure comprises 134 residues: MSSDTIADIITSIRNADMYRKSVVRVASTNISQSIVKILLREGFIENVRKHRENNKDFLVLTLRHRRNRKRPYRNLLNLKRISRPGLRIYSNYQRIPRILGGMGVVILSTSRGIMTDREARLERIGGEILCYIW.

It belongs to the universal ribosomal protein uS8 family. Part of the 30S ribosomal subunit.

It localises to the plastid. Its subcellular location is the chloroplast. In terms of biological role, one of the primary rRNA binding proteins, it binds directly to 16S rRNA central domain where it helps coordinate assembly of the platform of the 30S subunit. The chain is Small ribosomal subunit protein uS8c (rps8) from Helianthus annuus (Common sunflower).